The chain runs to 265 residues: Glutamate racemase (265 aa).

Substrate-binding positions include 10–11 (DS) and 42–43 (YG). Cysteine 73 acts as the Proton donor/acceptor in catalysis. Substrate is bound at residue 74–75 (NT). The Proton donor/acceptor role is filled by cysteine 180. Residue 181–182 (TH) coordinates substrate.

The protein belongs to the aspartate/glutamate racemases family.

It carries out the reaction L-glutamate = D-glutamate. It participates in cell wall biogenesis; peptidoglycan biosynthesis. In terms of biological role, provides the (R)-glutamate required for cell wall biosynthesis. The sequence is that of Glutamate racemase from Synechococcus sp. (strain CC9605).